The sequence spans 198 residues: Pyridoxal 5'-phosphate synthase subunit PdxT (198 aa).

An L-glutamine-binding site is contributed by 49 to 51 (GES). Cysteine 81 (nucleophile) is an active-site residue. Residues arginine 113 and 141 to 142 (IR) contribute to the L-glutamine site. Residues histidine 177 and glutamate 179 each act as charge relay system in the active site.

Belongs to the glutaminase PdxT/SNO family. As to quaternary structure, in the presence of PdxS, forms a dodecamer of heterodimers. Only shows activity in the heterodimer.

The enzyme catalyses aldehydo-D-ribose 5-phosphate + D-glyceraldehyde 3-phosphate + L-glutamine = pyridoxal 5'-phosphate + L-glutamate + phosphate + 3 H2O + H(+). The catalysed reaction is L-glutamine + H2O = L-glutamate + NH4(+). It participates in cofactor biosynthesis; pyridoxal 5'-phosphate biosynthesis. Functionally, catalyzes the hydrolysis of glutamine to glutamate and ammonia as part of the biosynthesis of pyridoxal 5'-phosphate. The resulting ammonia molecule is channeled to the active site of PdxS. This is Pyridoxal 5'-phosphate synthase subunit PdxT from Mycobacterium avium (strain 104).